The sequence spans 508 residues: Photosystem II CP47 reaction center protein (508 aa).

Transmembrane regions (helical) follow at residues 21 to 36, 101 to 115, 140 to 156, 203 to 218, 237 to 252, and 457 to 472; these read SVHI…WAGS, IVFS…IWHW, GIHL…FGAF, IAAG…FHLS, VLSS…AFVV, and SFAL…HGSR.

It belongs to the PsbB/PsbC family. PsbB subfamily. In terms of assembly, PSII is composed of 1 copy each of membrane proteins PsbA, PsbB, PsbC, PsbD, PsbE, PsbF, PsbH, PsbI, PsbJ, PsbK, PsbL, PsbM, PsbT, PsbX, PsbY, PsbZ, Psb30/Ycf12, at least 3 peripheral proteins of the oxygen-evolving complex and a large number of cofactors. It forms dimeric complexes. The cofactor is Binds multiple chlorophylls. PSII binds additional chlorophylls, carotenoids and specific lipids..

It is found in the plastid. The protein resides in the chloroplast thylakoid membrane. Its function is as follows. One of the components of the core complex of photosystem II (PSII). It binds chlorophyll and helps catalyze the primary light-induced photochemical processes of PSII. PSII is a light-driven water:plastoquinone oxidoreductase, using light energy to abstract electrons from H(2)O, generating O(2) and a proton gradient subsequently used for ATP formation. The chain is Photosystem II CP47 reaction center protein from Helianthus annuus (Common sunflower).